The following is a 570-amino-acid chain: High-affinity hexose transporter HXT7 (570 aa).

The Cytoplasmic segment spans residues 1–60 (MSQDAAIAEQTPVEHLSAVDSASHSVLSTPSNKAERDEIKAYGEGEEHEPVVEIPKRPAS). The helical transmembrane segment at 61–81 (AYVTVSIMCIMIAFGGFVFGW) threads the bilayer. The Extracellular portion of the chain corresponds to 82–116 (DTGTISGFINQTDFIRRFGMKHKDGTNYLSKVRTG). Asn-91 is a glycosylation site (N-linked (GlcNAc...) asparagine). Residues 117–137 (LIVSIFNIGCAIGGIILSKLG) traverse the membrane as a helical segment. The Cytoplasmic portion of the chain corresponds to 138–143 (DMYGRK). Residues 144 to 164 (VGLIVVVVIYIIGIIIQIASI) traverse the membrane as a helical segment. Over 165–174 (NKWYQYFIGR) the chain is Extracellular. The helical transmembrane segment at 175 to 195 (IISGLGVGGIAVLSPMLISEV) threads the bilayer. Over 196–201 (SPKHLR) the chain is Cytoplasmic. The chain crosses the membrane as a helical span at residues 202-222 (GTLVSCYQLMITAGIFLGYCT). Topologically, residues 223 to 236 (NFGTKNYSNSVQWR) are extracellular. N-linked (GlcNAc...) asparagine glycosylation occurs at Asn-228. Residues 237 to 257 (VPLGLCFAWALFMIGGMTFVP) form a helical membrane-spanning segment. The Cytoplasmic segment spans residues 258–340 (ESPRYLAEVG…IQSLQQLTGD (83 aa)). A helical transmembrane segment spans residues 341–357 (NYFFYYGTTIFKAVGLS). Residues 358-363 (DSFETS) lie on the Extracellular side of the membrane. Residues 364 to 381 (IVLGIVNFASTFVGIYVV) traverse the membrane as a helical segment. Residues 382–388 (ERYGRRT) are Cytoplasmic-facing. A helical transmembrane segment spans residues 389–409 (CLLWGAASMTACMVVYASVGV). The Extracellular segment spans residues 410-431 (TRLWPNGQDQPSSKGAGNCMIV). Residues 432 to 452 (FACFYIFCFATTWAPIPYVVV) form a helical membrane-spanning segment. Over 453–469 (SETFPLRVKSKAMSIAT) the chain is Cytoplasmic. A helical transmembrane segment spans residues 470-490 (AANWLWGFLIGFFTPFITGAI). Asn-491 is a topological domain (extracellular). The helical transmembrane segment at 492-512 (FYYGYVFMGCLVFMFFYVLLV) threads the bilayer. At 513 to 570 (VPETKGLTLEEVNTMWEEGVLPWKSASWVPPSRRGANYDAEEMTHDDKPLYKRMFSTK) the chain is on the cytoplasmic side. Thr-556 is modified (phosphothreonine). Lys-560 participates in a covalent cross-link: Glycyl lysine isopeptide (Lys-Gly) (interchain with G-Cter in ubiquitin).

This sequence belongs to the major facilitator superfamily. Sugar transporter (TC 2.A.1.1) family.

It is found in the membrane. High-affinity glucose transporter. The protein is High-affinity hexose transporter HXT7 (HXT7) of Saccharomyces cerevisiae (strain ATCC 204508 / S288c) (Baker's yeast).